The sequence spans 314 residues: MSFASDMKNELTRIDVDESNAKAELSALIRMNGALSLSNQQFVINIQTENATTARRIYSLIKRIFNVEVEILVRKKMKLKKNNIYICRTKVRAKEILDELGILKNGIFVHDIDASMIKDDEMRRSYLRGAFLAGGSVNNPETSSYHLEIFSQYENHSEGLTKLMNSYGLNAKHLERKKGSIAYLKEAEKISDFLSLIGGYQALLKFEDVRIVRDMRNSVNRLVNCETANLNKTVSAAMKQVESIQLIEQEIGLDNLPDRLREIAKLRVEHQEISLKELGEMISTGPISKSGVNHRLRKLNELADKIRSGEKIEL.

A DNA-binding region (H-T-H motif) is located at residues Ser-274–Ser-308.

The protein belongs to the WhiA family.

Its function is as follows. Involved in cell division and chromosome segregation. This chain is Probable cell division protein WhiA, found in Staphylococcus haemolyticus (strain JCSC1435).